A 264-amino-acid polypeptide reads, in one-letter code: Thymidylate synthase (264 aa).

R21 provides a ligand contact to dUMP. H51 contributes to the (6R)-5,10-methylene-5,6,7,8-tetrahydrofolate binding site. 126–127 (RR) is a binding site for dUMP. The active-site Nucleophile is C146. Residues 166–169 (RSAD), N177, and 207–209 (HLY) each bind dUMP. D169 lines the (6R)-5,10-methylene-5,6,7,8-tetrahydrofolate pocket. (6R)-5,10-methylene-5,6,7,8-tetrahydrofolate is bound at residue A263.

This sequence belongs to the thymidylate synthase family. Bacterial-type ThyA subfamily. Homodimer.

It is found in the cytoplasm. The enzyme catalyses dUMP + (6R)-5,10-methylene-5,6,7,8-tetrahydrofolate = 7,8-dihydrofolate + dTMP. It functions in the pathway pyrimidine metabolism; dTTP biosynthesis. Functionally, catalyzes the reductive methylation of 2'-deoxyuridine-5'-monophosphate (dUMP) to 2'-deoxythymidine-5'-monophosphate (dTMP) while utilizing 5,10-methylenetetrahydrofolate (mTHF) as the methyl donor and reductant in the reaction, yielding dihydrofolate (DHF) as a by-product. This enzymatic reaction provides an intracellular de novo source of dTMP, an essential precursor for DNA biosynthesis. The sequence is that of Thymidylate synthase from Legionella pneumophila (strain Corby).